The sequence spans 146 residues: Histone H2A.1 (146 aa).

Positions 118 to 146 (SPAAAEKEAKSPKKKTSTKSPKKKVAAKE) are disordered. 2 consecutive short sequence motifs (SPKK motif) follow at residues 128–131 (SPKK) and 137–140 (SPKK). The segment covering 129 to 146 (PKKKTSTKSPKKKVAAKE) has biased composition (basic residues).

The protein belongs to the histone H2A family. In terms of assembly, the nucleosome is a histone octamer containing two molecules each of H2A, H2B, H3 and H4 assembled in one H3-H4 heterotetramer and two H2A-H2B heterodimers. The octamer wraps approximately 147 bp of DNA. In terms of processing, phosphorylated within its C-terminal part, probably at the SPKK motifs. In terms of tissue distribution, expressed preferentially in meristematic tissues of young seedlings, in stigma and ovary but not in pollen.

It localises to the nucleus. The protein resides in the chromosome. In terms of biological role, core component of nucleosome. Nucleosomes wrap and compact DNA into chromatin, limiting DNA accessibility to the cellular machineries which require DNA as a template. Histones thereby play a central role in transcription regulation, DNA repair, DNA replication and chromosomal stability. DNA accessibility is regulated via a complex set of post-translational modifications of histones, also called histone code, and nucleosome remodeling. The polypeptide is Histone H2A.1 (H2A-9) (Triticum aestivum (Wheat)).